The chain runs to 87 residues: Small ribosomal subunit protein bS20 (87 aa).

The interval 1–20 is disordered; that stretch reads MANSAQARKRARTALKQRAH. A compositionally biased stretch (basic residues) spans 7 to 19; the sequence is ARKRARTALKQRA.

This sequence belongs to the bacterial ribosomal protein bS20 family.

Functionally, binds directly to 16S ribosomal RNA. The protein is Small ribosomal subunit protein bS20 of Chromobacterium violaceum (strain ATCC 12472 / DSM 30191 / JCM 1249 / CCUG 213 / NBRC 12614 / NCIMB 9131 / NCTC 9757 / MK).